Reading from the N-terminus, the 171-residue chain is Ribosome maturation factor RimM (171 aa).

Positions Asn94–Gly168 constitute a PRC barrel domain.

This sequence belongs to the RimM family. In terms of assembly, binds ribosomal protein uS19.

Its subcellular location is the cytoplasm. Its function is as follows. An accessory protein needed during the final step in the assembly of 30S ribosomal subunit, possibly for assembly of the head region. Essential for efficient processing of 16S rRNA. May be needed both before and after RbfA during the maturation of 16S rRNA. It has affinity for free ribosomal 30S subunits but not for 70S ribosomes. The protein is Ribosome maturation factor RimM of Anaplasma phagocytophilum (strain HZ).